The chain runs to 486 residues: Ribulose bisphosphate carboxylase large chain 3 (486 aa).

The substrate site is built by Asn125 and Thr175. Lys177 functions as the Proton acceptor in the catalytic mechanism. Lys179 contributes to the substrate binding site. Residues Lys203, Asp205, and Glu206 each contribute to the Mg(2+) site. Lys203 bears the N6-carboxylysine mark. The Proton acceptor role is filled by His295. Positions 296, 328, and 380 each coordinate substrate.

This sequence belongs to the RuBisCO large chain family. Type I subfamily. As to quaternary structure, heterohexadecamer of 8 large chains and 8 small chains. Mg(2+) is required as a cofactor.

The enzyme catalyses 2 (2R)-3-phosphoglycerate + 2 H(+) = D-ribulose 1,5-bisphosphate + CO2 + H2O. The catalysed reaction is D-ribulose 1,5-bisphosphate + O2 = 2-phosphoglycolate + (2R)-3-phosphoglycerate + 2 H(+). Functionally, ruBisCO catalyzes two reactions: the carboxylation of D-ribulose 1,5-bisphosphate, the primary event in carbon dioxide fixation, as well as the oxidative fragmentation of the pentose substrate. Both reactions occur simultaneously and in competition at the same active site. The chain is Ribulose bisphosphate carboxylase large chain 3 from Bradyrhizobium sp. (strain BTAi1 / ATCC BAA-1182).